We begin with the raw amino-acid sequence, 137 residues long: Hydrogenase maturation factor HypA (137 aa).

Position 2 (H2) interacts with Ni(2+). Residues C73, C75, C105, and C108 each contribute to the Zn(2+) site.

The protein belongs to the HypA/HybF family.

Functionally, involved in the maturation of [NiFe] hydrogenases. Required for nickel insertion into the metal center of the hydrogenase. The sequence is that of Hydrogenase maturation factor HypA from Methanosarcina mazei (strain ATCC BAA-159 / DSM 3647 / Goe1 / Go1 / JCM 11833 / OCM 88) (Methanosarcina frisia).